The chain runs to 370 residues: MSFEERRKKDSKESSSKEKDKALNLVLGQIERNFGRGSIMRLGDASRMKVETISTGALTLDLALGGGYPKGRVVEVYGPESSGKTTLTLHAIAEVQKNGGIAAFVDAEHALDPVYAASLGVDVENLLVSQPDTGEMALEIVDQLIRSTAVDLVVVDSVAALTPRAEIEGEMGDHVIGSQARLMSQAMRKITGNIGKSGCTVIFLNQLRLKIGVTYGNPETTTGGNALKFYASVRLDIRRIQTLKRGTEEYGIRAKVKVAKNKVAPPFRIAEFDILFGKGISTTGCLLDLAEETNIIIRRGAWYSYEGENIGQGRDNTIIWLDQNLEIKKKVEGIVKSKLTEGTEVSSNSMKALNSNPENAVIANDIKTVA.

The segment at 1 to 20 (MSFEERRKKDSKESSSKEKD) is disordered. 78–85 (GPESSGKT) lines the ATP pocket.

This sequence belongs to the RecA family.

It localises to the cytoplasm. Can catalyze the hydrolysis of ATP in the presence of single-stranded DNA, the ATP-dependent uptake of single-stranded DNA by duplex DNA, and the ATP-dependent hybridization of homologous single-stranded DNAs. It interacts with LexA causing its activation and leading to its autocatalytic cleavage. The chain is Protein RecA from Prochlorococcus marinus (strain MIT 9515).